The sequence spans 132 residues: Flagellar basal body rod protein FlgB (132 aa).

Belongs to the flagella basal body rod proteins family. In terms of assembly, the basal body constitutes a major portion of the flagellar organelle and consists of a number of rings mounted on a central rod. In Gram-negative bacteria, at least four rings, L, P, S and M are present, whereas Gram-positive bacteria lack the L and P rings. The rod consists of about 26 subunits of FlgG in the distal portion, and FlgB, FlgC and FlgF build up the proximal portion of the rod with about 6 subunits each. Rod assembly occurs by export via the flagellum-specific pathway of its constituent proteins and by their incorporation into the rod structure in the probable order of FlgB, FlgC, FlgF and FlgG. Another protein, FliE, also assembles onto the stable rod structure.

It is found in the bacterial flagellum basal body. Its function is as follows. Structural component of flagellum, the bacterial motility apparatus. Part of the rod structure of flagellar basal body. This chain is Flagellar basal body rod protein FlgB, found in Aeromonas hydrophila.